Reading from the N-terminus, the 360-residue chain is Isopentenyl-diphosphate delta-isomerase (360 aa).

6–7 (RK) contacts substrate. FMN contacts are provided by residues Thr-62, 63–65 (GMT), Ser-93, and Asn-122. 93–95 (SQR) serves as a coordination point for substrate. Gln-157 contributes to the substrate binding site. Glu-158 lines the Mg(2+) pocket. FMN contacts are provided by residues Lys-189, Ser-214, Thr-219, 272-274 (GIR), and 293-294 (AL).

This sequence belongs to the IPP isomerase type 2 family. Homooctamer. Dimer of tetramers. The cofactor is FMN. NADPH serves as cofactor. It depends on Mg(2+) as a cofactor.

The protein localises to the cytoplasm. It catalyses the reaction isopentenyl diphosphate = dimethylallyl diphosphate. Involved in the biosynthesis of isoprenoids. Catalyzes the 1,3-allylic rearrangement of the homoallylic substrate isopentenyl (IPP) to its allylic isomer, dimethylallyl diphosphate (DMAPP). The sequence is that of Isopentenyl-diphosphate delta-isomerase from Ignicoccus hospitalis (strain KIN4/I / DSM 18386 / JCM 14125).